The chain runs to 219 residues: Transmembrane emp24 domain-containing protein 10 (219 aa).

Residues methionine 1–alanine 31 form the signal peptide. Positions methionine 1–glutamate 142 are required for interaction with STX17. Topologically, residues isoleucine 32–arginine 185 are lumenal. In terms of domain architecture, GOLD spans arginine 41 to serine 193. Residues arginine 171 and arginine 176 each carry the dimethylated arginine modification. Asparagine 179 is a glycosylation site (N-linked (GlcNAc...) asparagine). The chain crosses the membrane as a helical span at residues valine 186 to phenylalanine 206. Residues glutamine 204–glutamate 219 form an interaction with COPG1 region. The Cytoplasmic segment spans residues tyrosine 207 to glutamate 219. The interaction with ARF1 and IL1B stretch occupies residues tyrosine 207–glutamate 219. The short motif at phenylalanine 211–phenylalanine 212 is the COPII vesicle coat-binding element. The COPI vesicle coat-binding signature appears at phenylalanine 211–glutamate 219.

The protein belongs to the EMP24/GP25L family. Predominantly dimeric and to a lesser extent monomeric in the ER. Monomer and dimer in ERGIC and cis-Golgi network. Forms homooligomer (via GOLD domain); the assembly is promoted by direct binding with leaderless cargos and may form a protein channel that facilitates cargo entry into the ERGIC. Forms heterooligomeric complexes with other members of the p24 family such as TMED2, TMED7 and TMED9. Interacts (via GOLD domain) with TMED2 (via GOLD domain); the complex is required for export of TMED10 from the ER to the cis-Golgi network; the complex is proposed to be involved in cis-Golgi network dynamics and / or biogenesis. Associates with the COPI vesicle coat subunits (coatomer). Tetramerization of the cytoplasmic domain at the Golgi membrane in vitro; the complex is proposed to interact with COPI coatomer and induce budding of the vesicles. Interacts with COPG1; the interaction involves TMED10 homodimer. Interacts with ARF1 (GDP-bound); the interaction probably involves a TMED10 oligomer. Interacts with SEC23A, SEC24B, SEC24C and SEC24D components of the coat protein complex II/COPII, indicative of an association of TMED10 with the COPII vesicle coat. Interacts with CD59. Interacts with MPPE1/PGAP5; the complex might recruit and sort GPI-anchored proteins to the ER-exit site, or the interaction might lead to recycling of PGAP5 between the ER and the Golgi. Interacts with F2LR1/PAR2. Interacts with KDELR2/ERD2; the interaction is disrupted by KDELR2 ligand. Found in a complex composed at least of SURF4, TMED2 and TMED10. Associates with the presenilin-dependent gamma-secretase complex. Interacts with STX17; the interaction is direct. Interacts with IL-1; the interaction is direct. Interacts with RAB21 (active GTP-bound form); the interaction is indirect and regulates TMED10 abundance and localization at the Golgi.

It is found in the endoplasmic reticulum membrane. The protein resides in the endoplasmic reticulum-Golgi intermediate compartment membrane. Its subcellular location is the golgi apparatus membrane. The protein localises to the golgi apparatus. It localises to the cis-Golgi network membrane. It is found in the trans-Golgi network membrane. The protein resides in the cytoplasmic vesicle. Its subcellular location is the secretory vesicle membrane. The protein localises to the cell membrane. It localises to the melanosome. Its function is as follows. Cargo receptor involved in protein vesicular trafficking and quality control in the endoplasmic reticulum (ER) and Golgi. The p24 protein family is a group of transmembrane proteins that bind coat protein complex I/COPI and coat protein complex II/COPII involved in vesicular trafficking between the membranes. Acts at the lumenal side for incorporation of secretory cargo molecules into transport vesicles and involved in vesicle coat formation at the cytoplasmic side. Mainly functions in the early secretory pathway and cycles between the ER, ER-Golgi intermediate compartment (ERGIC) and Golgi, mediating cargo transport through COPI and COPII-coated vesicles. In COPII vesicle-mediated anterograde transport, involved in the transport of GPI-anchored proteins by acting together with TMED2 as their cargo receptor; the function specifically implies SEC24C and SEC24D of the COPII vesicle coat and lipid raft-like microdomains of the ER. Recognizes GPI anchors structural remodeled in the ER by the GPI inositol-deacylase/PGAP1 and the metallophosphoesterase MPPE1/PGAP5. In COPI vesicle-mediated retrograde transport, involved in the biogenesis of COPI vesicles and vesicle coat recruitment. Involved in trafficking of amyloid beta A4 protein and soluble APP-beta release (independent from the modulation of gamma-secretase activity). Involved in the KDELR2-mediated retrograde transport of the toxin A subunit (CTX-A-K63)together with COPI and the COOH terminus of KDELR2. On Golgi membranes, acts as a primary receptor for ARF1-GDP, a GTP-binding protein involved in COPI-vesicle formation. Increases coatomer-dependent GTPase-activating activity of ARFGAP2 which mediates the hydrolysis of ARF1-bound GTP and therefore modulates protein trafficking from the Golgi apparatus. Involved in the exocytic trafficking of G protein-coupled receptors F2LR1/PAR2 (trypsin and tryspin-like enzyme receptor), OPRM1 (opioid receptor) and P2RY4 (UTD and UDP receptor) from the Golgi to the plasma membrane, thus contributing to receptor resensitization. In addition to its cargo receptor activity, may also act as a protein channel after oligomerization, facilitating the post-translational entry of leaderless cytoplasmic cargo into the ERGIC. Involved in the translocation into ERGIC, the vesicle entry and the secretion of leaderless cargos (lacking the secretion signal sequence), including the mature form of interleukin 1/IL-1 family members, the alpha-crystallin B chain HSPB5, the carbohydrate-binding proteins galectin-1/LGALS1 and galectin-3/LGALS3, the microtubule-associated protein Tau/MAPT, and the annexin A1/ANXA1; the translocation process is dependent on cargo protein unfolding and enhanced by chaperones HSP90AB1 and HSP90B1/GRP9. Could also associates with the presenilin-dependent gamma-secretase complex in order to regulate gamma-cleavages of the amyloid beta A4 protein to yield amyloid-beta 40/Abeta40. This is Transmembrane emp24 domain-containing protein 10 (TMED10) from Pongo abelii (Sumatran orangutan).